Consider the following 146-residue polypeptide: Hemoglobin subunit beta (146 aa).

The residue at position 1 (valine 1) is an N-acetylvaline. The 145-residue stretch at 2 to 146 folds into the Globin domain; that stretch reads HLTGEEKAAV…VANALAHKYH (145 aa). Threonine 12 is subject to Phosphothreonine. At serine 44 the chain carries Phosphoserine. Position 59 is an N6-acetyllysine (lysine 59). Histidine 63 contacts heme b. Lysine 82 carries the N6-acetyllysine modification. Histidine 92 lines the heme b pocket. Cysteine 93 is subject to S-nitrosocysteine. Residue lysine 144 is modified to N6-acetyllysine.

It belongs to the globin family. In terms of assembly, heterotetramer of two alpha chains and two beta chains. As to expression, red blood cells.

Involved in oxygen transport from the lung to the various peripheral tissues. In Aotus trivirgatus (Three-striped night monkey), this protein is Hemoglobin subunit beta (HBB).